Consider the following 710-residue polypeptide: Probable inactive DNA (cytosine-5)-methyltransferase DRM3 (710 aa).

The tract at residues 1-21 (MADMRRRNGSGGSSNHERNEQ) is disordered. The 41-residue stretch at 52-92 (SGSNVKSLLIEMGFCPTLVQKAIDENGQDDFELLLEILTKS) folds into the UBA 1 domain. A compositionally biased stretch (acidic residues) spans 167–184 (ESEDSLDGAEINEEDEDV). The segment at 167–192 (ESEDSLDGAEINEEDEDVTPVTARGP) is disordered. Residues 198-242 (QLFETMDKTLRLLEMGFSNDEISMAIEKIGTKGQISVLAESIVTG) enclose the UBA 2 domain. Positions 282 to 360 (AQKEDGGGGS…MGDSSSFMET (79 aa)) are disordered. Basic and acidic residues predominate over residues 339-350 (YDDRGKRLRPED). The 332-residue stretch at 379 to 710 (QPRLSQSLGP…RVTKRVRDMM (332 aa)) folds into the SAM-dependent MTase DRM-type domain.

The protein belongs to the class I-like SAM-binding methyltransferase superfamily. DRM-methyltransferase family. As to quaternary structure, interacts with Pol V.

It localises to the nucleus. Catalytically inactive DNA methyltransferase that acts as regulatory factor for DRM2-mediated DNA methylation. Required for maintenance of non-CpG DNA methylation. Required for normal establishment and maintenance of RNA-directed DNA methylation (RdDM) and accumulation of specific repeat-associated small interfering RNAs (siRNAs). Required for nucleolus organizer region (NOR) nuclear organization during interphase. Acts downstream of the production of siRNAs. May promote RNA polymerase V (Pol V) transcriptional elongation or assist in the stabilization of Pol V transcripts. This is Probable inactive DNA (cytosine-5)-methyltransferase DRM3 from Arabidopsis thaliana (Mouse-ear cress).